We begin with the raw amino-acid sequence, 212 residues long: Pyridoxine/pyridoxamine 5'-phosphate oxidase (212 aa).

Residues 8–11 and lysine 66 contribute to the substrate site; that span reads RREY. FMN contacts are provided by residues 61–66, 76–77, arginine 82, lysine 83, and glutamine 105; these read RIVLLK and FT. Substrate is bound by residues tyrosine 123, arginine 127, and serine 131. FMN contacts are provided by residues 140 to 141 and tryptophan 185; that span reads QS. Residue 191 to 193 coordinates substrate; it reads RLH. Arginine 195 provides a ligand contact to FMN.

This sequence belongs to the pyridoxamine 5'-phosphate oxidase family. In terms of assembly, homodimer. The cofactor is FMN.

It catalyses the reaction pyridoxamine 5'-phosphate + O2 + H2O = pyridoxal 5'-phosphate + H2O2 + NH4(+). The catalysed reaction is pyridoxine 5'-phosphate + O2 = pyridoxal 5'-phosphate + H2O2. It functions in the pathway cofactor metabolism; pyridoxal 5'-phosphate salvage; pyridoxal 5'-phosphate from pyridoxamine 5'-phosphate: step 1/1. It participates in cofactor metabolism; pyridoxal 5'-phosphate salvage; pyridoxal 5'-phosphate from pyridoxine 5'-phosphate: step 1/1. Its function is as follows. Catalyzes the oxidation of either pyridoxine 5'-phosphate (PNP) or pyridoxamine 5'-phosphate (PMP) into pyridoxal 5'-phosphate (PLP). The polypeptide is Pyridoxine/pyridoxamine 5'-phosphate oxidase (Shewanella sp. (strain ANA-3)).